The chain runs to 113 residues: Na(+)/H(+) antiporter subunit C1 (113 aa).

A run of 3 helical transmembrane segments spans residues 1–21 (MEII…YLVL), 28–48 (IVMG…TMGG), and 72–92 (LILT…VLAF).

This sequence belongs to the CPA3 antiporters (TC 2.A.63) subunit C family. In terms of assembly, may form a heterooligomeric complex that consists of seven subunits: mnhA1, mnhB1, mnhC1, mnhD1, mnhE1, mnhF1 and mnhG1.

It localises to the cell membrane. Functionally, mnh complex is a Na(+)/H(+) antiporter involved in Na(+) excretion. This Staphylococcus aureus (strain JH1) protein is Na(+)/H(+) antiporter subunit C1 (mnhC1).